Here is a 300-residue protein sequence, read N- to C-terminus: Probable alpha-L-glutamate ligase (300 aa).

One can recognise an ATP-grasp domain in the interval 104 to 287 (LQLLARQGID…IAGKMISWIE (184 aa)). Residues Lys-141, 178–179 (EY), Asp-187, and 211–213 (RSN) contribute to the ATP site. Positions 248, 260, and 262 each coordinate Mg(2+). The Mn(2+) site is built by Asp-248, Glu-260, and Asn-262.

It belongs to the RimK family. Requires Mg(2+) as cofactor. Mn(2+) is required as a cofactor.

This chain is Probable alpha-L-glutamate ligase, found in Enterobacter sp. (strain 638).